The chain runs to 422 residues: Histidine--tRNA ligase (422 aa).

Belongs to the class-II aminoacyl-tRNA synthetase family. Homodimer.

It localises to the cytoplasm. It carries out the reaction tRNA(His) + L-histidine + ATP = L-histidyl-tRNA(His) + AMP + diphosphate + H(+). The polypeptide is Histidine--tRNA ligase (Alcanivorax borkumensis (strain ATCC 700651 / DSM 11573 / NCIMB 13689 / SK2)).